The sequence spans 320 residues: Solute carrier family 35 member B1 (320 aa).

A run of 8 helical transmembrane segments spans residues 9 to 29, 49 to 69, 81 to 103, 134 to 154, 166 to 186, 202 to 222, 241 to 261, and 283 to 303; these read GLRL…YGIL, FALS…KLLI, QSWL…NSAL, YPLT…LFMY, TVGY…LTGV, MMLS…VLTG, IVLF…TVVY, and VILF…LVFL. The short motif at 316 to 320 is the Di-lysine motif element; it reads KKPSH.

The protein belongs to the nucleotide-sugar transporter family. SLC35B subfamily.

The protein resides in the endoplasmic reticulum membrane. Its function is as follows. Probable sugar transporter. This is Solute carrier family 35 member B1 (slc35b1) from Xenopus laevis (African clawed frog).